A 114-amino-acid chain; its full sequence is Neurotrophic factor BDNF precursor form (114 aa).

3 disulfides stabilise this stretch: Cys14/Cys81, Cys59/Cys110, and Cys69/Cys112.

It belongs to the NGF-beta family. Monomers and homodimers. Binds to NTRK2/TRKB. Can form heterodimers with other neurotrophin family members, such as NTF3 and NTF4 (in vitro), but the physiological relevance of this is not clear. BDNF precursor form: interacts with the heterodimer formed by NGFR and SORCS2. Mature BDNF has much lower affinity for the heterodimer formed by NGFR and SORCS2. Post-translationally, N-glycosylated and glycosulfated, contrary to mature BDNF. Mature BDNF is produced by proteolytic removal of the propeptide, catalyzed by a FURIN family member. In addition, the precursor form is proteolytically cleaved within the propeptide, but this is not an obligatory intermediate for the production of mature BDNF. Can be converted into mature BDNF by plasmin (PLG).

It is found in the secreted. Functionally, important signaling molecule that activates signaling cascades downstream of NTRK2. During development, promotes the survival and differentiation of selected neuronal populations of the peripheral and central nervous systems. Participates in axonal growth, pathfinding and in the modulation of dendritic growth and morphology. Major regulator of synaptic transmission and plasticity at adult synapses in many regions of the CNS. The versatility of BDNF is emphasized by its contribution to a range of adaptive neuronal responses including long-term potentiation (LTP), long-term depression (LTD), certain forms of short-term synaptic plasticity, as well as homeostatic regulation of intrinsic neuronal excitability. Its function is as follows. Important signaling molecule that activates signaling cascades downstream of NTRK2. Activates signaling cascades via the heterodimeric receptor formed by NGFR and SORCS2. Signaling via NGFR and SORCS2 plays a role in synaptic plasticity and long-term depression (LTD). Binding to NGFR and SORCS2 promotes neuronal apoptosis. Promotes neuronal growth cone collapse. The chain is Neurotrophic factor BDNF precursor form (BDNF) from Macaca mulatta (Rhesus macaque).